A 375-amino-acid polypeptide reads, in one-letter code: Probable dipeptidase PepE (375 aa).

A run of 2 helical transmembrane segments spans residues 15–35 (LALAAAATADAGLAGLVITPG) and 55–75 (LVLPAAGAPAVVLPRLELAAL). Mn(2+) contacts are provided by Asp-230, Asp-242, His-306, Glu-335, and Glu-349.

This sequence belongs to the peptidase M24B family. The cofactor is Mn(2+).

It is found in the cell membrane. The polypeptide is Probable dipeptidase PepE (pepE) (Mycobacterium bovis (strain ATCC BAA-935 / AF2122/97)).